Reading from the N-terminus, the 433-residue chain is Enolase (433 aa).

Gln-163 contributes to the (2R)-2-phosphoglycerate binding site. The Proton donor role is filled by Glu-205. Asp-242, Glu-291, and Asp-318 together coordinate Mg(2+). (2R)-2-phosphoglycerate contacts are provided by Lys-343, Arg-372, Ser-373, and Lys-394. Catalysis depends on Lys-343, which acts as the Proton acceptor.

The protein belongs to the enolase family. Mg(2+) is required as a cofactor.

Its subcellular location is the cytoplasm. It localises to the secreted. It is found in the cell surface. It catalyses the reaction (2R)-2-phosphoglycerate = phosphoenolpyruvate + H2O. It participates in carbohydrate degradation; glycolysis; pyruvate from D-glyceraldehyde 3-phosphate: step 4/5. Functionally, catalyzes the reversible conversion of 2-phosphoglycerate (2-PG) into phosphoenolpyruvate (PEP). It is essential for the degradation of carbohydrates via glycolysis. This is Enolase from Methylibium petroleiphilum (strain ATCC BAA-1232 / LMG 22953 / PM1).